A 73-amino-acid polypeptide reads, in one-letter code: Translation initiation factor IF-1 (73 aa).

The region spanning 1–72 (MAKQDVIEME…TKGRITYRLR (72 aa)) is the S1-like domain.

This sequence belongs to the IF-1 family. As to quaternary structure, component of the 30S ribosomal translation pre-initiation complex which assembles on the 30S ribosome in the order IF-2 and IF-3, IF-1 and N-formylmethionyl-tRNA(fMet); mRNA recruitment can occur at any time during PIC assembly.

It is found in the cytoplasm. One of the essential components for the initiation of protein synthesis. Stabilizes the binding of IF-2 and IF-3 on the 30S subunit to which N-formylmethionyl-tRNA(fMet) subsequently binds. Helps modulate mRNA selection, yielding the 30S pre-initiation complex (PIC). Upon addition of the 50S ribosomal subunit IF-1, IF-2 and IF-3 are released leaving the mature 70S translation initiation complex. The chain is Translation initiation factor IF-1 from Gloeobacter violaceus (strain ATCC 29082 / PCC 7421).